Here is a 147-residue protein sequence, read N- to C-terminus: Transthyretin (147 aa).

Positions 1-20 (MASHRLLLLCLAGLVFVSEA) are cleaved as a signal peptide. Cys-30 is subject to Sulfocysteine. An L-thyroxine-binding site is contributed by Lys-35. Glu-62 is modified (4-carboxyglutamate). Ser-72 is modified (phosphoserine). An L-thyroxine-binding site is contributed by Glu-74. N-linked (GlcNAc...) asparagine glycosylation is present at Asn-118. Residue Ser-137 participates in L-thyroxine binding.

It belongs to the transthyretin family. In terms of assembly, homotetramer. Dimer of dimers. In the homotetramer, subunits assemble around a central channel that can accommodate two ligand molecules. Interacts with RBP4. In terms of processing, sulfonation of the reactive cysteine Cys-30 enhances the stability of the native conformation of TTR, avoiding misassembly of the protein leading to amyloid formation. In terms of tissue distribution, detected in brain.

It localises to the secreted. Functionally, thyroid hormone-binding protein. Probably transports thyroxine from the bloodstream to the brain. This is Transthyretin (TTR) from Pan troglodytes (Chimpanzee).